Consider the following 188-residue polypeptide: Ribose 1,5-bisphosphate phosphokinase PhnN (188 aa).

This sequence belongs to the ribose 1,5-bisphosphokinase family.

It carries out the reaction alpha-D-ribose 1,5-bisphosphate + ATP = 5-phospho-alpha-D-ribose 1-diphosphate + ADP. It functions in the pathway metabolic intermediate biosynthesis; 5-phospho-alpha-D-ribose 1-diphosphate biosynthesis; 5-phospho-alpha-D-ribose 1-diphosphate from D-ribose 5-phosphate (route II): step 3/3. Catalyzes the phosphorylation of ribose 1,5-bisphosphate to 5-phospho-D-ribosyl alpha-1-diphosphate (PRPP). This Dickeya zeae (strain Ech586) (Dickeya dadantii (strain Ech586)) protein is Ribose 1,5-bisphosphate phosphokinase PhnN.